Reading from the N-terminus, the 445-residue chain is Tubulin beta-9 chain (445 aa).

Residues glutamine 11, glutamate 69, serine 138, glycine 142, threonine 143, glycine 144, asparagine 204, and asparagine 226 each coordinate GTP. Glutamate 69 is a binding site for Mg(2+). Positions 423 to 445 are disordered; that stretch reads QQYQDATADDEEYEEEEEYEAEA. Residues 429–445 show a composition bias toward acidic residues; that stretch reads TADDEEYEEEEEYEAEA.

This sequence belongs to the tubulin family. As to quaternary structure, dimer of alpha and beta chains. A typical microtubule is a hollow water-filled tube with an outer diameter of 25 nm and an inner diameter of 15 nM. Alpha-beta heterodimers associate head-to-tail to form protofilaments running lengthwise along the microtubule wall with the beta-tubulin subunit facing the microtubule plus end conferring a structural polarity. Microtubules usually have 13 protofilaments but different protofilament numbers can be found in some organisms and specialized cells. Mg(2+) is required as a cofactor.

The protein localises to the cytoplasm. It is found in the cytoskeleton. In terms of biological role, tubulin is the major constituent of microtubules, a cylinder consisting of laterally associated linear protofilaments composed of alpha- and beta-tubulin heterodimers. Microtubules grow by the addition of GTP-tubulin dimers to the microtubule end, where a stabilizing cap forms. Below the cap, tubulin dimers are in GDP-bound state, owing to GTPase activity of alpha-tubulin. The protein is Tubulin beta-9 chain of Gossypium hirsutum (Upland cotton).